A 330-amino-acid chain; its full sequence is Malate dehydrogenase (330 aa).

An NAD(+)-binding site is contributed by 13-19 (GAAGQIG). 2 residues coordinate substrate: R94 and R100. NAD(+) contacts are provided by residues N107, Q114, and 131–133 (VGN). The substrate site is built by N133 and R164. The Proton acceptor role is filled by H189.

The protein belongs to the LDH/MDH superfamily. MDH type 2 family.

It carries out the reaction (S)-malate + NAD(+) = oxaloacetate + NADH + H(+). In terms of biological role, catalyzes the reversible oxidation of malate to oxaloacetate. The polypeptide is Malate dehydrogenase (Deinococcus deserti (strain DSM 17065 / CIP 109153 / LMG 22923 / VCD115)).